The following is a 310-amino-acid chain: Olfactory receptor 8I2 (310 aa).

Topologically, residues 1-25 (MAGNNFTEVTVFILSGFANHPELQV) are extracellular. Asn-5 carries N-linked (GlcNAc...) asparagine glycosylation. The helical transmembrane segment at 26–46 (SLFLMFLFIYLFTVLGNLGLI) threads the bilayer. Residues 47–54 (TLIRMDSQ) are Cytoplasmic-facing. Residues 55 to 75 (LHTPMYFFLSNLAFIDIFYSS) form a helical membrane-spanning segment. The Extracellular segment spans residues 76 to 99 (TVTPKALVNFQSNRRSISFVGCFV). A disulfide bond links Cys-97 and Cys-188. Residues 100–120 (QMYFFVGLVCCECFLLGSMAY) form a helical membrane-spanning segment. Residues 121–139 (NRYIAICNPLLYSVVMSQK) lie on the Cytoplasmic side of the membrane. Residues 140 to 160 (VSNWLGVMPYVIGFTSSLISV) traverse the membrane as a helical segment. The Extracellular segment spans residues 161-196 (WVISSLAFCDSSINHFFCDTTALLALSCVDTFGTEM). A helical membrane pass occupies residues 197 to 216 (VSFVLAGFTLLSSLLIITVT). The Cytoplasmic segment spans residues 217–236 (YIIIISAILRIQSAAGRQKA). Residues 237–257 (FSTCASHLMAVTIFYGSLIFT) traverse the membrane as a helical segment. Residues 258–270 (YLQPDNTSSLTQA) are Extracellular-facing. A helical membrane pass occupies residues 271 to 291 (QVASVFYTIVIPMLNPLIYSL). At 292–310 (RNKDVKNALLRVIHRKLFP) the chain is on the cytoplasmic side.

Belongs to the G-protein coupled receptor 1 family.

The protein resides in the cell membrane. Odorant receptor. The chain is Olfactory receptor 8I2 (OR8I2) from Homo sapiens (Human).